The sequence spans 379 residues: Cytochrome b (379 aa).

A run of 4 helical transmembrane segments spans residues Phe-34 to Met-54, Trp-78 to Ile-99, Trp-114 to Leu-134, and Phe-179 to Thr-199. Heme b contacts are provided by His-84 and His-98. Heme b is bound by residues His-183 and His-197. Residue His-202 coordinates a ubiquinone. A run of 4 helical transmembrane segments spans residues Leu-227 to Ser-247, Leu-289 to His-309, Leu-321 to Ser-341, and Phe-348 to Pro-368.

Belongs to the cytochrome b family. The cytochrome bc1 complex contains 11 subunits: 3 respiratory subunits (MT-CYB, CYC1 and UQCRFS1), 2 core proteins (UQCRC1 and UQCRC2) and 6 low-molecular weight proteins (UQCRH/QCR6, UQCRB/QCR7, UQCRQ/QCR8, UQCR10/QCR9, UQCR11/QCR10 and a cleavage product of UQCRFS1). This cytochrome bc1 complex then forms a dimer. Heme b serves as cofactor.

It is found in the mitochondrion inner membrane. In terms of biological role, component of the ubiquinol-cytochrome c reductase complex (complex III or cytochrome b-c1 complex) that is part of the mitochondrial respiratory chain. The b-c1 complex mediates electron transfer from ubiquinol to cytochrome c. Contributes to the generation of a proton gradient across the mitochondrial membrane that is then used for ATP synthesis. This chain is Cytochrome b (MT-CYB), found in Struthio camelus (Common ostrich).